The sequence spans 300 residues: Iodotyrosine deiodinase (300 aa).

Residues 15-31 (VGLISVSIAAGVALGQL) form a helical membrane-spanning segment. FMN contacts are provided by residues 110–114 (RRSVR), serine 138, and 138–139 (SG). 3,5-diiodo-L-tyrosine-binding residues include alanine 140, glutamate 167, tyrosine 171, and lysine 192. Positions 140, 167, 171, and 192 each coordinate 3-iodo-L-tyrosine. Residues 247 to 249 (TTT) and arginine 289 each bind FMN.

The protein belongs to the nitroreductase family. FMN is required as a cofactor. In terms of processing, may be cleaved at Gln-55. The cleaved form retains catalytic activity.

It is found in the membrane. It catalyses the reaction 2 iodide + L-tyrosine + 2 NADP(+) = 3,5-diiodo-L-tyrosine + 2 NADPH + H(+). The catalysed reaction is iodide + L-tyrosine + NADP(+) = 3-iodo-L-tyrosine + NADPH. The enzyme catalyses 3-iodo-L-tyrosine + iodide + NADP(+) = 3,5-diiodo-L-tyrosine + NADPH + H(+). It carries out the reaction L-tyrosine + chloride + NADP(+) = 3-chloro-L-tyrosine + NADPH. It catalyses the reaction bromide + L-tyrosine + NADP(+) = 3-bromo-L-tyrosine + NADPH. Catalyzes the dehalogenation of halotyrosines such as 3,5-diiodo-L-tyrosine. Likely to also catalyze the dehalogenation of other halotyrosines such as 3-bromo-L-tyrosine, 3-chloro-L-tyrosine and 3-iodo-L-tyrosine. The protein is Iodotyrosine deiodinase of Daphnia pulex (Water flea).